The chain runs to 151 residues: D-aminoacyl-tRNA deacylase (151 aa).

A Gly-cisPro motif, important for rejection of L-amino acids motif is present at residues 136-137 (GP).

The protein belongs to the DTD family. Homodimer.

It is found in the cytoplasm. It carries out the reaction glycyl-tRNA(Ala) + H2O = tRNA(Ala) + glycine + H(+). It catalyses the reaction a D-aminoacyl-tRNA + H2O = a tRNA + a D-alpha-amino acid + H(+). In terms of biological role, an aminoacyl-tRNA editing enzyme that deacylates mischarged D-aminoacyl-tRNAs. Also deacylates mischarged glycyl-tRNA(Ala), protecting cells against glycine mischarging by AlaRS. Acts via tRNA-based rather than protein-based catalysis; rejects L-amino acids rather than detecting D-amino acids in the active site. By recycling D-aminoacyl-tRNA to D-amino acids and free tRNA molecules, this enzyme counteracts the toxicity associated with the formation of D-aminoacyl-tRNA entities in vivo and helps enforce protein L-homochirality. The sequence is that of D-aminoacyl-tRNA deacylase from Lactococcus lactis subsp. lactis (strain IL1403) (Streptococcus lactis).